The sequence spans 167 residues: Cyclic pyranopterin monophosphate synthase 2 (167 aa).

The disordered stretch occupies residues 1-23; sequence MARASGASDYRSGELSHQDERGA. Basic and acidic residues predominate over residues 11-23; it reads RSGELSHQDERGA. Substrate contacts are provided by residues 86-88 and 122-123; these read LCH and ME. The active site involves Asp-137.

The protein belongs to the MoaC family. As to quaternary structure, homohexamer; trimer of dimers.

The catalysed reaction is (8S)-3',8-cyclo-7,8-dihydroguanosine 5'-triphosphate = cyclic pyranopterin phosphate + diphosphate. It functions in the pathway cofactor biosynthesis; molybdopterin biosynthesis. Its function is as follows. Catalyzes the conversion of (8S)-3',8-cyclo-7,8-dihydroguanosine 5'-triphosphate to cyclic pyranopterin monophosphate (cPMP). The protein is Cyclic pyranopterin monophosphate synthase 2 (moaC2) of Mycobacterium bovis (strain ATCC BAA-935 / AF2122/97).